We begin with the raw amino-acid sequence, 858 residues long: MQEQYNPQDLEQKIQKHWDDNKTFVVTEDANKEKFYCLSMFPYPSGRLHMGHVRNYTIGDVVSRYQRLQGKNVMQPIGWDAFGLPAENAAVKNKTAPAPWTYENIEYMKNQLKLLGFGYDWNREFATCTPEYYRWEQEFFTKLYSKGLVYKKTSSVNWCPNDQTVLANEQVEDGCCWRCDTPVEQKKIPQWFIKITEYAQELLDDLDNLDGWPEMVKTMQRNWIGRSEGVELSFAVNGEESPLEVYTTRPDTLMGVTYVGIAAGHPLAEKASQNNPELAAFVEECRNTKVAEAELATMEKKGMDTGLRAIHPLNGREVPVFVANFVLMDYGTGAVMAVPAHDQRDFEFATKYGLDIIPVIKPEDGSDLDVSEAAYTEKGVLFDSGEFDGLAFQEAFDAIAAKLEAEGKGKKTVNFRLRDWGVSRQRYWGAPIPMVTTEDGEVHPVPADQLPVILPEDVVMDGVTSPIKADKEWAKTTFNGEPALRETDTFDTFMESSWYYARYCSPQADDILDPEKANYWLPVDQYIGGIEHACMHLLYSRFFHKLLRDAGYVTSDEPFKQLLCQGMVLADAFYYTNDKGGKEWVAPTDVTIERDAKGRIEKAVDDQGREVEHSGMIKMSKSKNNGIDPQEMVDKYGADTVRLFMMFASPADMTLEWQESGVEGANRFLKRVWKLVHEHTNKGTTEALDTSSLTGDQKALRRDVHKTIAKVSDDIGRRQTFNTAIAAIMELMNKLNKAPQESAQDRALLDEALKAVVAMLYPMTPHASFAMWEALGESDLDSATWPTFDENALVEDEKTIVVMINGKLRAKLVVAADATEEHVRELGLKDENAMKFLDGLTIRKVIYVPGKLLNIVAN.

Positions 42 to 52 match the 'HIGH' region motif; sequence PYPSGRLHMGH. Positions 618-622 match the 'KMSKS' region motif; it reads KMSKS. Position 621 (Lys-621) interacts with ATP.

Belongs to the class-I aminoacyl-tRNA synthetase family.

The protein localises to the cytoplasm. The catalysed reaction is tRNA(Leu) + L-leucine + ATP = L-leucyl-tRNA(Leu) + AMP + diphosphate. The polypeptide is Leucine--tRNA ligase (Aliivibrio fischeri (strain MJ11) (Vibrio fischeri)).